The following is a 342-amino-acid chain: Cytosolic Fe-S cluster assembly factor NBP35 (342 aa).

The interval 16–42 is disordered; sequence SKAAPKLVAPEPEHCPGPESEQAGKGD. Residues Cys-30, Cys-44, Cys-47, and Cys-53 each coordinate [4Fe-4S] cluster. ATP is bound at residue 83–90; that stretch reads GKGGVGKS. Cys-256 and Cys-259 together coordinate [4Fe-4S] cluster.

The protein belongs to the Mrp/NBP35 ATP-binding proteins family. NUBP1/NBP35 subfamily. In terms of assembly, heterotetramer of 2 NBP35 and 2 CFD1 chains. The cofactor is [4Fe-4S] cluster.

It localises to the cytoplasm. Its function is as follows. Component of the cytosolic iron-sulfur (Fe/S) protein assembly (CIA) machinery. Required for maturation of extramitochondrial Fe-S proteins. The NBP35-CFD1 heterotetramer forms a Fe-S scaffold complex, mediating the de novo assembly of an Fe-S cluster and its transfer to target apoproteins. The protein is Cytosolic Fe-S cluster assembly factor NBP35 of Coccidioides immitis (strain RS) (Valley fever fungus).